A 182-amino-acid chain; its full sequence is Large ribosomal subunit protein bL25 (182 aa).

It belongs to the bacterial ribosomal protein bL25 family. CTC subfamily. In terms of assembly, part of the 50S ribosomal subunit; part of the 5S rRNA/L5/L18/L25 subcomplex. Contacts the 5S rRNA. Binds to the 5S rRNA independently of L5 and L18.

In terms of biological role, this is one of the proteins that binds to the 5S RNA in the ribosome where it forms part of the central protuberance. This is Large ribosomal subunit protein bL25 from Borreliella burgdorferi (strain ZS7) (Borrelia burgdorferi).